The sequence spans 370 residues: Keratin-associated protein 10-7 (370 aa).

The 30 X 5 AA repeats of C-C-X(3) stretch occupies residues 36–363; sequence DCPESCCEPP…CSRPACCGPT (328 aa). Repeat copies occupy residues 41–45, 46–50, 67–71, 89–93, 99–103, 109–113, 114–118, 119–123, 135–139, 145–149, 155–159, 160–164, 172–176, 186–190, 208–212, 218–222, 228–232, 233–237, 238–242, 250–254, 255–259, 265–269, 270–274, 275–279, 287–291, 297–301, 302–306, 321–325, 339–343, and 359–363.

The protein belongs to the KRTAP type 10 family. As to quaternary structure, interacts with hair keratins. As to expression, restricted to a narrow region of the hair fiber cuticle, lying approximately 20 cell layers above the apex of the dermal papilla of the hair root; not detected in any other tissues.

Its function is as follows. In the hair cortex, hair keratin intermediate filaments are embedded in an interfilamentous matrix, consisting of hair keratin-associated proteins (KRTAP), which are essential for the formation of a rigid and resistant hair shaft through their extensive disulfide bond cross-linking with abundant cysteine residues of hair keratins. The matrix proteins include the high-sulfur and high-glycine-tyrosine keratins. This is Keratin-associated protein 10-7 (KRTAP10-7) from Homo sapiens (Human).